The chain runs to 261 residues: MALNKNHSEGGGVIVNNTESILMSYDHVELTFNDMKNVPEAFKGTKKGTVYLTPYRVIFLSKGKDAMQSFMMPFYLMKDCEIKQPVFGANYIKGTVKAEAGGGWEGSASYKLTFTAGGAIEFGQRMLQVASQASRGEVPSGAYGYSYMPSGAYVYPPPVANGMYPCPPGYPYPPPPPEFYPGPPMMDGAMGYVQPPPPPYPGPMEPPVSGPDVPSTPAAEAKAAEAAASAYYNPGNPHNVYMPTSQPPPPPYYPPEDKKTQ.

The GRAM domain maps to 1–84 (MALNKNHSEG…YLMKDCEIKQ (84 aa)). Tyrosine 192 carries the post-translational modification Phosphotyrosine; by YES and SRC. The PPxY motif 1 signature appears at 196–200 (PPPPY). A compositionally biased stretch (pro residues) spans 196–209 (PPPPYPGPMEPPVS). The segment at 196–261 (PPPPYPGPME…YYPPEDKKTQ (66 aa)) is disordered. Low complexity predominate over residues 218-230 (AAEAKAAEAAASA). Tyrosine 231 is modified (phosphotyrosine; by YES and SRC). Pro residues predominate over residues 245 to 254 (SQPPPPPYYP). The PPxY motif 2 motif lies at 248 to 252 (PPPPY).

As to quaternary structure, binds to the WW domain of YAP1, WWP1 and WWP2. Interacts with NEDD4. Interacts with ESR1 and UBE3A. Post-translationally, phosphorylated in repsonse to EGF as well as estrogen and progesterone hormones. Tyr-192 and Tyr-231 are phosphorylated by YES and SRC inducing nuclear translocation. As to expression, ubiquitous.

The protein resides in the cytoplasm. Its subcellular location is the nucleus. Acts as a transcriptional coactivator of estrogen and progesterone receptors (ESR1 and PGR) upon hormone activation. In presence of estrogen, binds to ESR1-responsive promoters. Synergizes with YAP1 to enhance PGR activity. Modulates expression of post-synaptic scaffolding proteins via regulation of ESR1, ESR2 and PGR. In Homo sapiens (Human), this protein is WW domain-binding protein 2.